Here is a 741-residue protein sequence, read N- to C-terminus: Catalase-peroxidase (741 aa).

The first 23 residues, 1-23 (MLKKIVTALGMSGMLLASSNAIA), serve as a signal peptide directing secretion. Positions 102-223 (WHDAGTYRIY…YAATQMGLIY (122 aa)) form a cross-link, tryptophyl-tyrosyl-methioninium (Trp-Tyr) (with M-249). His-103 acts as the Proton acceptor in catalysis. A cross-link (tryptophyl-tyrosyl-methioninium (Tyr-Met) (with W-102)) is located at residues 223-249 (YVNPEGPDGKPDIKGAASEIRQAFRAM). A heme b-binding site is contributed by His-264.

This sequence belongs to the peroxidase family. Peroxidase/catalase subfamily. As to quaternary structure, homodimer or homotetramer. Heme b serves as cofactor. Post-translationally, formation of the three residue Trp-Tyr-Met cross-link is important for the catalase, but not the peroxidase activity of the enzyme.

It catalyses the reaction H2O2 + AH2 = A + 2 H2O. The enzyme catalyses 2 H2O2 = O2 + 2 H2O. Its function is as follows. Bifunctional enzyme with both catalase and broad-spectrum peroxidase activity. This Francisella tularensis subsp. tularensis (strain WY96-3418) protein is Catalase-peroxidase.